Reading from the N-terminus, the 121-residue chain is Large ribosomal subunit protein bL19 (121 aa).

This sequence belongs to the bacterial ribosomal protein bL19 family.

This protein is located at the 30S-50S ribosomal subunit interface and may play a role in the structure and function of the aminoacyl-tRNA binding site. The protein is Large ribosomal subunit protein bL19 of Chlorobaculum tepidum (strain ATCC 49652 / DSM 12025 / NBRC 103806 / TLS) (Chlorobium tepidum).